The primary structure comprises 479 residues: MASLARAMLALLALYAAAIAAAPSTTTALDTTPNGGGGGNSSEGELSPSPPPTPAPASPEAGAVSTPPVPPPSVSRRKPPRNNNRTRVHGDKATAHGRKRIVCRERLFSARVGDAVSFGCAVFPRAGETFEVRFYRRGRFRSPDADPEYFDEPPRPELPRERLLFSSANASLAHADALAPVVVEGERATVANVSGEVSVRVAAADAETEGVYTWRVLSANGTEVRSANVSLLLYSQPEFGLSAPPVLFGEPFRAVCVVRDYYPRRSVRLRWFADEHPVDAAFVTNSTVADELGRRTRVSVVNVTRADVPGLAAADAADALAPSLRCEAVWYRDSVASQRFSEALRPHVYHPAAVSVRFVEGFAVCDGLCVPPEARLAWSDHAADTVYHLGACAEHPGLLNVRSARPLSDLDGPVDYTCRLEGLPSQLPVFEDTQRYDASPASVSWPVVSSMIVVIAGIGILAIVLVIMATCVYYRQAGP.

The N-terminal stretch at 1–22 (MASLARAMLALLALYAAAIAAA) is a signal peptide. At 23 to 451 (PSTTTALDTT…SVSWPVVSSM (429 aa)) the chain is on the virion surface side. Residues 26 to 96 (TTALDTTPNG…RVHGDKATAH (71 aa)) are disordered. Asn-40 carries N-linked (GlcNAc...) asparagine; by host glycosylation. Pro residues predominate over residues 48 to 57 (PSPPPTPAPA). The interval 75-82 (SRRKPPRN) is HDB1. A compositionally biased stretch (basic residues) spans 75-87 (SRRKPPRNNNRTR). Residue Asn-84 is glycosylated (N-linked (GlcNAc...) asparagine; by host). The interval 95-101 (AHGRKRI) is HDB2. The cysteines at positions 103 and 120 are disulfide-linked. The HDB3 stretch occupies residues 135 to 140 (YRRGRF). 6 N-linked (GlcNAc...) asparagine; by host glycosylation sites follow: Asn-169, Asn-192, Asn-220, Asn-228, Asn-285, and Asn-302. Cystine bridges form between Cys-256–Cys-326, Cys-365–Cys-418, and Cys-369–Cys-392. Residues 452–472 (IVVIAGIGILAIVLVIMATCV) form a helical membrane-spanning segment. At 473 to 479 (YYRQAGP) the chain is on the cytoplasmic side.

The protein belongs to the herpesviridae glycoprotein C family. As to quaternary structure, interacts with host complement component C3; this interaction inhibits host immune response by disregulating complement cascade.

It localises to the virion membrane. Its function is as follows. Essential for the initial attachment to heparan sulfate moieties of the host cell surface proteoglycans. Plays also a role in host immune evasion by inhibiting the host complement cascade activation. This chain is Envelope glycoprotein C homolog (gC), found in Suid herpesvirus 1 (strain Indiana-Funkhauser / Becker) (SuHV-1).